A 760-amino-acid chain; its full sequence is Serine/threonine-protein kinase Haspin homolog ALK1 (760 aa).

Phosphoserine occurs at positions 76 and 79. Disordered stretches follow at residues 76-100, 123-153, 187-264, and 362-408; these read SDAS…KKRW, SSFT…SSLD, DDIS…STVS, and KRNS…CSYS. Residues 78-95 are compositionally biased toward polar residues; sequence ASLNVTTGNNTSRKTTSN. The KEN box motif lies at 200-202; sequence KEN. Residues 209–220 are compositionally biased toward polar residues; that stretch reads KKNSSIASTSSE. The D box motif lies at 224–232; that stretch reads RTPLKPLVN. A compositionally biased stretch (polar residues) spans 237 to 250; sequence PTSQPQQQQPLYNA. The segment covering 251–264 has biased composition (low complexity); that stretch reads SLSSRRSSISSTVS. Over residues 362–386 the composition is skewed to basic residues; it reads KRNSQSSLKHKSSHASLQKFKRNKG. The segment covering 398–408 has biased composition (low complexity); the sequence is NSSNDDSCSYS. The region spanning 468–760 is the Protein kinase domain; that stretch reads NCDIKRILNP…NTGDLLKLYK (293 aa). ATP is bound by residues 474-482 and lysine 510; that span reads ILNPAKGDV.

This sequence belongs to the protein kinase superfamily. Ser/Thr protein kinase family. Haspin subfamily. Periodically phosphorylated during the cell cycle with a phosphorylation peak during mitosis and hyperphosphorylated after DNA damage.

The enzyme catalyses L-seryl-[protein] + ATP = O-phospho-L-seryl-[protein] + ADP + H(+). It carries out the reaction L-threonyl-[protein] + ATP = O-phospho-L-threonyl-[protein] + ADP + H(+). Functionally, serine/threonine haspin-like protein kinase involved in cell cycle regulation. This chain is Serine/threonine-protein kinase Haspin homolog ALK1 (ALK1), found in Saccharomyces cerevisiae (strain ATCC 204508 / S288c) (Baker's yeast).